The primary structure comprises 322 residues: Cytochrome f (322 aa).

The first 35 residues, 1–35 (MQTRNTFSWTWIREEITRSISVSLMIYIITWSSIS), serve as a signal peptide directing secretion. Tyrosine 38, cysteine 58, cysteine 61, and histidine 62 together coordinate heme. A helical transmembrane segment spans residues 288–308 (VQGLLFFLGSVVLAQIFLVLK).

This sequence belongs to the cytochrome f family. In terms of assembly, the 4 large subunits of the cytochrome b6-f complex are cytochrome b6, subunit IV (17 kDa polypeptide, petD), cytochrome f and the Rieske protein, while the 4 small subunits are PetG, PetL, PetM and PetN. The complex functions as a dimer. Heme is required as a cofactor.

It localises to the plastid. The protein localises to the chloroplast thylakoid membrane. In terms of biological role, component of the cytochrome b6-f complex, which mediates electron transfer between photosystem II (PSII) and photosystem I (PSI), cyclic electron flow around PSI, and state transitions. This Aethionema cordifolium (Lebanon stonecress) protein is Cytochrome f.